Here is a 758-residue protein sequence, read N- to C-terminus: Calpain (758 aa).

A Calpain catalytic domain is found at 99 to 397; the sequence is LWEDPDFPAN…FSRVEVCHLG (299 aa). Active-site residues include C154, H313, and N337. The interval 398–562 is domain III; sequence LESLEYNQNF…TSITEQELDE (165 aa). The linker stretch occupies residues 563-582; it reads DNTNQGLPDDVIEALKLEDT. The segment at 583–757 is domain IV; that stretch reads LLDEDQEIEQ…AEDYLRFSVY (175 aa). Ca(2+) is bound by residues D641, N643, T645, H647, E652, D671, D673, S675, Y677, and E682. 2 EF-hand domains span residues 658-693 and 694-729; these read IQAK…AGYH and VSNR…LKTA.

Belongs to the peptidase C2 family.

Its activity is regulated as follows. Activated by free cytoplasmic calcium. Functionally, calpains are calcium-activated non-lysosomal thiol-proteases. This is Calpain from Schistosoma mansoni (Blood fluke).